The following is a 184-amino-acid chain: ADP-ribosylation factor-like protein 2 (184 aa).

G2 is lipidated: N-myristoyl glycine. GTP contacts are provided by residues 23-30 (GLDNAGKT), 66-70 (DVGGQ), and 125-128 (NKQD).

It belongs to the small GTPase superfamily. Arf family. As to expression, ubiquitously expressed.

GTP-binding protein involved in protein trafficking; may modulate vesicle budding and uncoating within the Golgi apparatus. The chain is ADP-ribosylation factor-like protein 2 (Arl2) from Drosophila melanogaster (Fruit fly).